The following is a 534-amino-acid chain: Peptide chain release factor 3 (534 aa).

Residues Ala9–Gln278 enclose the tr-type G domain. Residues Ser18 to Thr25, Asp86 to His90, and Asn140 to Asp143 contribute to the GTP site.

The protein belongs to the TRAFAC class translation factor GTPase superfamily. Classic translation factor GTPase family. PrfC subfamily.

The protein localises to the cytoplasm. In terms of biological role, increases the formation of ribosomal termination complexes and stimulates activities of RF-1 and RF-2. It binds guanine nucleotides and has strong preference for UGA stop codons. It may interact directly with the ribosome. The stimulation of RF-1 and RF-2 is significantly reduced by GTP and GDP, but not by GMP. The protein is Peptide chain release factor 3 of Xylella fastidiosa (strain M23).